The primary structure comprises 340 residues: HTH-type transcriptional regulator CelR (340 aa).

Residues 1–61 (MERRRRPTLE…PNRAARTLVT (61 aa)) enclose the HTH lacI-type domain. The segment at residues 9 to 28 (LEMVAALAGVGRGTVSRVIN) is a DNA-binding region (H-T-H motif).

Its subcellular location is the cytoplasm. With respect to regulation, activity is controlled by cytoplasmic cellobiose levels. Binding of CelR to the celE promoter is inhibited specifically by low concentrations of cellobiose, the major end product of cellulases. Activity may also be regulated through post-translational modification. In terms of biological role, transcriptional regulator that regulates the expression of all six cellulases, encoded by the cel genes (designated celA through celF). Acts as a repressor. Specifically binds to a 14-bp inverted repeat site, which is present in the upstream region of the cellulase genes. In Thermobifida fusca (Thermomonospora fusca), this protein is HTH-type transcriptional regulator CelR.